Here is a 77-residue protein sequence, read N- to C-terminus: Large ribosomal subunit protein bL28 (77 aa).

It belongs to the bacterial ribosomal protein bL28 family.

This Methylibium petroleiphilum (strain ATCC BAA-1232 / LMG 22953 / PM1) protein is Large ribosomal subunit protein bL28.